A 360-amino-acid polypeptide reads, in one-letter code: Phosphoserine aminotransferase (360 aa).

Residue R42 participates in L-glutamate binding. Pyridoxal 5'-phosphate contacts are provided by residues 76-77, W102, T152, D172, and Q195; that span reads AR. K196 carries the post-translational modification N6-(pyridoxal phosphate)lysine. 237–238 serves as a coordination point for pyridoxal 5'-phosphate; it reads NT.

The protein belongs to the class-V pyridoxal-phosphate-dependent aminotransferase family. SerC subfamily. As to quaternary structure, homodimer. Requires pyridoxal 5'-phosphate as cofactor.

Its subcellular location is the cytoplasm. It carries out the reaction O-phospho-L-serine + 2-oxoglutarate = 3-phosphooxypyruvate + L-glutamate. The catalysed reaction is 4-(phosphooxy)-L-threonine + 2-oxoglutarate = (R)-3-hydroxy-2-oxo-4-phosphooxybutanoate + L-glutamate. Its pathway is amino-acid biosynthesis; L-serine biosynthesis; L-serine from 3-phospho-D-glycerate: step 2/3. It participates in cofactor biosynthesis; pyridoxine 5'-phosphate biosynthesis; pyridoxine 5'-phosphate from D-erythrose 4-phosphate: step 3/5. Its function is as follows. Catalyzes the reversible conversion of 3-phosphohydroxypyruvate to phosphoserine and of 3-hydroxy-2-oxo-4-phosphonooxybutanoate to phosphohydroxythreonine. In Pasteurella multocida (strain Pm70), this protein is Phosphoserine aminotransferase.